A 126-amino-acid polypeptide reads, in one-letter code: Large ribosomal subunit protein bL20 (126 aa).

Belongs to the bacterial ribosomal protein bL20 family.

Binds directly to 23S ribosomal RNA and is necessary for the in vitro assembly process of the 50S ribosomal subunit. It is not involved in the protein synthesizing functions of that subunit. The protein is Large ribosomal subunit protein bL20 of Parafrankia sp. (strain EAN1pec).